Here is a 103-residue protein sequence, read N- to C-terminus: Large ribosomal subunit protein bL21 (103 aa).

This sequence belongs to the bacterial ribosomal protein bL21 family. As to quaternary structure, part of the 50S ribosomal subunit. Contacts protein L20.

In terms of biological role, this protein binds to 23S rRNA in the presence of protein L20. This is Large ribosomal subunit protein bL21 from Pseudomonas aeruginosa (strain LESB58).